The following is a 264-amino-acid chain: Major prion protein (264 aa).

Positions 1–24 (MVKRHIGSWILVLFVVMWSDVGLC) are cleaved as a signal peptide. The interval 25-241 (KKRPKPGGGW…ESQAYYQRGA (217 aa)) is interaction with GRB2, ERI3 and SYN1. Residues 27–119 (RPKPGGGWNT…WNKPSKPKTN (93 aa)) form a disordered region. A run of 6 repeats spans residues 54 to 62 (SQGGGGWGQ), 63 to 70 (PHGGGWGQ), 71 to 78 (PHGGGWGQ), 79 to 86 (PHGGGWGQ), 87 to 94 (PHGGGWGQ), and 95 to 103 (PHGGGGWGQ). The 6 X 8 AA tandem repeats of P-H-G-G-G-W-G-Q stretch occupies residues 54 to 103 (SQGGGGWGQPHGGGWGQPHGGGWGQPHGGGWGQPHGGGWGQPHGGGGWGQ). Over residues 55–105 (QGGGGWGQPHGGGWGQPHGGGWGQPHGGGWGQPHGGGWGQPHGGGGWGQGG) the composition is skewed to gly residues. Residues His72, Gly73, Gly74, His80, Gly81, Gly82, His88, Gly89, Gly90, His96, Gly98, and Gly99 each contribute to the Cu(2+) site. A disulfide bridge links Cys190 with Cys225. 2 N-linked (GlcNAc...) asparagine glycosylation sites follow: Asn192 and Asn208. Ala241 is lipidated: GPI-anchor amidated alanine. Positions 242–264 (SVILFSSPPVILLISLLIFLIVG) are cleaved as a propeptide — removed in mature form.

Belongs to the prion family. As to quaternary structure, monomer and homodimer. Has a tendency to aggregate into amyloid fibrils containing a cross-beta spine, formed by a steric zipper of superposed beta-strands. Soluble oligomers may represent an intermediate stage on the path to fibril formation. Copper binding may promote oligomerization. Interacts with GRB2, APP, ERI3/PRNPIP and SYN1. Mislocalized cytosolically exposed PrP interacts with MGRN1; this interaction alters MGRN1 subcellular location and causes lysosomal enlargement. Interacts with KIAA1191.

It is found in the cell membrane. The protein resides in the golgi apparatus. Functionally, its primary physiological function is unclear. Has cytoprotective activity against internal or environmental stresses. May play a role in neuronal development and synaptic plasticity. May be required for neuronal myelin sheath maintenance. May play a role in iron uptake and iron homeostasis. Soluble oligomers are toxic to cultured neuroblastoma cells and induce apoptosis (in vitro). Association with GPC1 (via its heparan sulfate chains) targets PRNP to lipid rafts. Also provides Cu(2+) or Zn(2+) for the ascorbate-mediated GPC1 deaminase degradation of its heparan sulfate side chains. The polypeptide is Major prion protein (PRNP) (Bubalus bubalis (Domestic water buffalo)).